The primary structure comprises 201 residues: Ribonuclease HII (201 aa).

In terms of domain architecture, RNase H type-2 spans 10–200 (LIEAGCDEAG…LGDGQLELFS (191 aa)). A divalent metal cation contacts are provided by Asp16, Glu17, and Asp108.

It belongs to the RNase HII family. Requires Mn(2+) as cofactor. The cofactor is Mg(2+).

The protein localises to the cytoplasm. It carries out the reaction Endonucleolytic cleavage to 5'-phosphomonoester.. Functionally, endonuclease that specifically degrades the RNA of RNA-DNA hybrids. The sequence is that of Ribonuclease HII from Bacteroides fragilis (strain ATCC 25285 / DSM 2151 / CCUG 4856 / JCM 11019 / LMG 10263 / NCTC 9343 / Onslow / VPI 2553 / EN-2).